The following is a 108-amino-acid chain: Ig kappa chain V-V region HP R16.7 (108 aa).

Positions Asp-1–Cys-23 are framework-1. Cys-23 and Cys-88 form a disulfide bridge. Residues Arg-24–Asn-34 are complementarity-determining-1. Residues Trp-35–Tyr-49 form a framework-2 region. The complementarity-determining-2 stretch occupies residues Tyr-50 to Ser-56. Positions Gly-57–Cys-88 are framework-3. The segment at Gln-89–Thr-97 is complementarity-determining-3. The framework-4 stretch occupies residues Phe-98–Arg-108.

In Mus musculus (Mouse), this protein is Ig kappa chain V-V region HP R16.7.